The following is a 109-amino-acid chain: Small ribosomal subunit protein uS15c (109 aa).

It belongs to the universal ribosomal protein uS15 family. As to quaternary structure, part of the 30S ribosomal subunit.

Its subcellular location is the plastid. It localises to the chloroplast. In Trachelium caeruleum (Blue throatwort), this protein is Small ribosomal subunit protein uS15c (rps15-A).